The sequence spans 286 residues: uncharacterized protein (286 aa).

NAD(+)-binding positions include 4-18 and T95; that span reads AVIGLGNMGQPIARN. K171 is an active-site residue. K239 is a binding site for NAD(+).

The protein belongs to the HIBADH-related family.

This is an uncharacterized protein from Bacillus subtilis (strain 168).